A 1194-amino-acid polypeptide reads, in one-letter code: Multidrug efflux ATP-binding/permease protein BCG_0231 (1194 aa).

The next 6 membrane-spanning stretches (helical) occupy residues 20-40, 56-76, 130-150, 153-173, 258-278, and 279-299; these read LLLG…VPLV, LAPW…LTYV, LLFD…GVAV, WLSV…GLIA, FALG…FVAF, and WACL…LTIA. The ABC transmembrane type-1 1 domain occupies 21–301; that stretch reads LLGFGAALAG…LAGMLTIAQQ (281 aa). The region spanning 334–568 is the ABC transporter 1 domain; that stretch reads LEFQRVSFGY…CPRYRELLSP (235 aa). ATP is bound at residue 367-374; that stretch reads GAPGSGKS. Helical transmembrane passes span 628–648, 660–680, 743–763, 765–785, 847–867, and 878–898; these read ALSL…PLLI, VLSA…IRWV, LVVA…LLAI, ARLV…TWQF, LLAL…TLVL, and VISV…YTPI. The ABC transmembrane type-1 2 domain occupies 628 to 910; sequence ALSLLLVAVQ…LAQMFDDYQR (283 aa). The 236-residue stretch at 942 to 1177 folds into the ABC transporter 2 domain; that stretch reads VVFDAVHYSY…GGHYSRLWAA (236 aa). 976–983 contributes to the ATP binding site; that stretch reads GSTGSGKS.

Belongs to the ABC transporter superfamily. Lipid exporter (TC 3.A.1.106) family.

Its subcellular location is the cell inner membrane. In terms of biological role, overexpression increases resistance to chloramphenicol, ampicillin, streptomycin, tetracyclin and vancomycin. The protein is Multidrug efflux ATP-binding/permease protein BCG_0231 of Mycobacterium bovis (strain BCG / Pasteur 1173P2).